The sequence spans 500 residues: Polyamine oxidase 1 (500 aa).

Residues 1–28 form the signal peptide; sequence MSSSPSFGLLAVAALLLALSLAQHGSLA. Residues 42–43, Glu-63, Arg-71, and 87–88 each bind FAD; these read MS and NW. A substrate-binding site is contributed by Glu-90. The N-linked (GlcNAc...) asparagine glycan is linked to Asn-105. Glu-198 contributes to the substrate binding site. 3 residues coordinate FAD: Val-265, Tyr-427, and Glu-458. Position 466 (Gly-466) interacts with substrate. 467–468 lines the FAD pocket; sequence YV. A disulfide bridge connects residues Cys-485 and Cys-491.

Belongs to the flavin monoamine oxidase family. Monomer. FAD serves as cofactor.

It localises to the secreted. The protein resides in the extracellular space. The protein localises to the apoplast. It is found in the cell wall. The enzyme catalyses spermidine + O2 + H2O = 4-aminobutanal + propane-1,3-diamine + H2O2. The catalysed reaction is N(8)-acetylspermidine + O2 + H2O = 4-acetamidobutanal + propane-1,3-diamine + H2O2. It catalyses the reaction spermine + O2 + H2O = N-(3-aminopropyl)-4-aminobutanal + propane-1,3-diamine + H2O2. It carries out the reaction N(1)-acetylspermine + O2 + H2O = N-(3-acetamidopropyl)-4-aminobutanal + propane-1,3-diamine + H2O2. Its pathway is amine and polyamine degradation; spermine degradation. Functionally, flavoenzyme involved in polyamine back-conversion. Catalyzes the oxidation of the secondary amino group of polyamines, such as spermine, spermidine and their acetyl derivatives. Plays an important role in the regulation of polyamine intracellular concentration. This is Polyamine oxidase 1 from Zea mays (Maize).